Reading from the N-terminus, the 373-residue chain is GTPase Obg (373 aa).

Positions Met-1–Ile-158 constitute an Obg domain. Residues Asn-62–Gln-83 are disordered. Positions Ile-64–Lys-76 are enriched in basic and acidic residues. An OBG-type G domain is found at Ala-159 to Lys-362. Residues Gly-165–Ser-172, Phe-190–Thr-194, Asp-212–Gly-215, Thr-280–Asp-283, and Ser-343–Val-345 each bind GTP. Ser-172 and Thr-192 together coordinate Mg(2+).

The protein belongs to the TRAFAC class OBG-HflX-like GTPase superfamily. OBG GTPase family. Monomer. Mg(2+) is required as a cofactor.

It localises to the cytoplasm. Functionally, an essential GTPase which binds GTP, GDP and possibly (p)ppGpp with moderate affinity, with high nucleotide exchange rates and a fairly low GTP hydrolysis rate. Plays a role in control of the cell cycle, stress response, ribosome biogenesis and in those bacteria that undergo differentiation, in morphogenesis control. This is GTPase Obg from Sulfurovum sp. (strain NBC37-1).